A 479-amino-acid chain; its full sequence is ATP-dependent RNA helicase DDX19B (479 aa).

Position 2 is an N-acetylalanine (A2). Residues A2–E300 form an N-terminal lobe region. Positions T34–E54 are disordered. The interval D55 to S68 is N-terminal helix. Residues K92–E120 carry the Q motif motif. ATP is bound by residues Q119 and S138–T145. The 171-residue stretch at L125–I295 folds into the Helicase ATP-binding domain. The DEAD box motif lies at D242 to D245. The C-terminal lobe stretch occupies residues E301–N479. The Helicase C-terminal domain maps to T306–I474. Residues R429 and R432 each coordinate ATP.

Belongs to the DEAD box helicase family. DDX19/DBP5 subfamily. As to quaternary structure, associates with the nuclear pore complex via interaction with NUP214. Interacts with NUP214 or RNA in a mutually exclusive manner.

The protein resides in the cytoplasm. The protein localises to the nucleus. Its subcellular location is the nucleoplasm. It catalyses the reaction ATP + H2O = ADP + phosphate + H(+). Functionally, ATP-dependent RNA helicase involved in mRNA export from the nucleus. Rather than unwinding RNA duplexes, DDX19B functions as a remodeler of ribonucleoprotein particles, whereby proteins bound to nuclear mRNA are dissociated and replaced by cytoplasmic mRNA binding proteins. In Homo sapiens (Human), this protein is ATP-dependent RNA helicase DDX19B (DDX19B).